Consider the following 267-residue polypeptide: Membrane-spanning 4-domains subfamily A member 10 (267 aa).

The Cytoplasmic portion of the chain corresponds to Met1 to Gly61. A helical transmembrane segment spans residues Ala62–Val82. Topologically, residues Lys83–Lys91 are extracellular. A helical transmembrane segment spans residues Ser92–Met112. The Cytoplasmic portion of the chain corresponds to Lys113–Lys121. The chain crosses the membrane as a helical span at residues Met122–Ile142. At Ser143–Glu171 the chain is on the extracellular side. The chain crosses the membrane as a helical span at residues Leu172–Ala192. Residues Trp193–Asn267 are Cytoplasmic-facing.

The protein belongs to the MS4A family.

Its subcellular location is the membrane. In terms of biological role, may be involved in signal transduction as a component of a multimeric receptor complex. This chain is Membrane-spanning 4-domains subfamily A member 10 (MS4A10), found in Homo sapiens (Human).